The primary structure comprises 329 residues: Putative 1-aminocyclopropane-1-carboxylate deaminase (329 aa).

Lys54 is subject to N6-(pyridoxal phosphate)lysine.

The protein belongs to the ACC deaminase/D-cysteine desulfhydrase family. Pyridoxal 5'-phosphate serves as cofactor.

The enzyme catalyses 1-aminocyclopropane-1-carboxylate + H2O = 2-oxobutanoate + NH4(+). The sequence is that of Putative 1-aminocyclopropane-1-carboxylate deaminase from Pyrococcus furiosus (strain ATCC 43587 / DSM 3638 / JCM 8422 / Vc1).